The sequence spans 233 residues: Small ribosomal subunit protein uS3 (233 aa).

Residues 39 to 107 (VRQFLASELT…PSQINIAEVR (69 aa)) enclose the KH type-2 domain.

It belongs to the universal ribosomal protein uS3 family. In terms of assembly, part of the 30S ribosomal subunit. Forms a tight complex with proteins S10 and S14.

Binds the lower part of the 30S subunit head. Binds mRNA in the 70S ribosome, positioning it for translation. The chain is Small ribosomal subunit protein uS3 from Baumannia cicadellinicola subsp. Homalodisca coagulata.